The primary structure comprises 141 residues: Hemoglobin subunit alpha-3 (141 aa).

Positions 1–141 (VLSPADKTNV…VSTVLTSKYR (141 aa)) constitute a Globin domain. An O2-binding site is contributed by histidine 58. Residue histidine 87 coordinates heme b.

It belongs to the globin family. As to quaternary structure, heterotetramer of two alpha chains and two beta chains. As to expression, red blood cells.

Functionally, involved in oxygen transport from the lung to the various peripheral tissues. The sequence is that of Hemoglobin subunit alpha-3 from Gorilla gorilla gorilla (Western lowland gorilla).